The following is a 258-amino-acid chain: Imidazole glycerol phosphate synthase subunit HisF (258 aa).

Residues Asp11 and Asp130 contribute to the active site.

It belongs to the HisA/HisF family. As to quaternary structure, heterodimer of HisH and HisF.

The protein resides in the cytoplasm. The catalysed reaction is 5-[(5-phospho-1-deoxy-D-ribulos-1-ylimino)methylamino]-1-(5-phospho-beta-D-ribosyl)imidazole-4-carboxamide + L-glutamine = D-erythro-1-(imidazol-4-yl)glycerol 3-phosphate + 5-amino-1-(5-phospho-beta-D-ribosyl)imidazole-4-carboxamide + L-glutamate + H(+). It participates in amino-acid biosynthesis; L-histidine biosynthesis; L-histidine from 5-phospho-alpha-D-ribose 1-diphosphate: step 5/9. Its function is as follows. IGPS catalyzes the conversion of PRFAR and glutamine to IGP, AICAR and glutamate. The HisF subunit catalyzes the cyclization activity that produces IGP and AICAR from PRFAR using the ammonia provided by the HisH subunit. In Blochmanniella pennsylvanica (strain BPEN), this protein is Imidazole glycerol phosphate synthase subunit HisF.